Reading from the N-terminus, the 396-residue chain is DNA-directed RNA polymerase subunit 6 (396 aa).

Disordered regions lie at residues M1–D137 and N290–E396. Composition is skewed to acidic residues over residues E21–N53, I76–G88, and E97–D137. Residues N290 to V312 show a composition bias toward polar residues. 2 stretches are compositionally biased toward low complexity: residues S313–N338 and N346–G366. A compositionally biased stretch (basic residues) spans S367–K380. Residues N385–E396 show a composition bias toward acidic residues.

Belongs to the archaeal Rpo6/eukaryotic RPB6 RNA polymerase subunit family.

It catalyses the reaction RNA(n) + a ribonucleoside 5'-triphosphate = RNA(n+1) + diphosphate. DNA-dependent RNA polymerase catalyzes the transcription of DNA into RNA using the four ribonucleoside triphosphates as substrates. The polypeptide is DNA-directed RNA polymerase subunit 6 (Acanthamoeba polyphaga (Amoeba)).